We begin with the raw amino-acid sequence, 311 residues long: Chalcone synthase 4 (311 aa).

Cys-164 is a catalytic residue.

It belongs to the thiolase-like superfamily. Chalcone/stilbene synthases family.

The catalysed reaction is (E)-4-coumaroyl-CoA + 3 malonyl-CoA + 3 H(+) = 2',4,4',6'-tetrahydroxychalcone + 3 CO2 + 4 CoA. Its pathway is secondary metabolite biosynthesis; flavonoid biosynthesis. Its function is as follows. The primary product of this enzyme is 4,2',4',6'-tetrahydroxychalcone (also termed naringenin-chalcone or chalcone) which can under specific conditions spontaneously isomerize into naringenin. The protein is Chalcone synthase 4 (CHS4) of Trifolium subterraneum (Subterranean clover).